The primary structure comprises 397 residues: Chorismate synthase (397 aa).

Residues Arg-40 and Arg-46 each contribute to the NADP(+) site. Residues 129 to 131, 257 to 258, Gly-302, 317 to 321, and Arg-343 each bind FMN; these read RAS, QA, and KPIAT.

It belongs to the chorismate synthase family. As to quaternary structure, homotetramer. Requires FMNH2 as cofactor.

It catalyses the reaction 5-O-(1-carboxyvinyl)-3-phosphoshikimate = chorismate + phosphate. The protein operates within metabolic intermediate biosynthesis; chorismate biosynthesis; chorismate from D-erythrose 4-phosphate and phosphoenolpyruvate: step 7/7. Catalyzes the anti-1,4-elimination of the C-3 phosphate and the C-6 proR hydrogen from 5-enolpyruvylshikimate-3-phosphate (EPSP) to yield chorismate, which is the branch point compound that serves as the starting substrate for the three terminal pathways of aromatic amino acid biosynthesis. This reaction introduces a second double bond into the aromatic ring system. The polypeptide is Chorismate synthase (Chlorobium phaeobacteroides (strain BS1)).